Here is a 184-residue protein sequence, read N- to C-terminus: uncharacterized protein (184 aa).

A signal peptide spans 1–20 (MYQLEKIWVLLCLALVGVLG).

This is an uncharacterized protein from Drosophila melanogaster (Fruit fly).